Here is an 86-residue protein sequence, read N- to C-terminus: Mu-theraphotoxin-Cg2a 3 (86 aa).

The first 21 residues, 1 to 21 (MKVSVVITLAVLGVMFVWASA), serve as a signal peptide directing secretion. Residues 22-50 (AELKERGSDQRDSPAWIKSMERIFQSEER) constitute a propeptide that is removed on maturation. 3 disulfide bridges follow: cysteine 52–cysteine 66, cysteine 59–cysteine 71, and cysteine 65–cysteine 78. At phenylalanine 84 the chain carries Phenylalanine amide.

Belongs to the neurotoxin 10 (Hwtx-1) family. 37 (Jztx-31) subfamily. As to expression, expressed by the venom gland.

The protein localises to the secreted. Functionally, inhibits both peak current and fast inactivation of voltage-gated sodium channels (Nav) channels. Inhibits the inactivation of Nav on DRG neurons (EC(50)=1.77 uM) and peak current of cardiac myocytes (IC(50)=0.90 uM). In Chilobrachys guangxiensis (Chinese earth tiger tarantula), this protein is Mu-theraphotoxin-Cg2a 3.